The following is a 305-amino-acid chain: MSKRLPPLNALRVFDAAARHLSFTRAAEELFVTQAAVSHQIKSLEDFLGLKLFRRRNRSLLLTEEGQSYFLDIKEIFSQLTEATRKLQARSAKGALTVSLLPSFAIHWLVPRLSSFNSAYPGIDVRIQAVDRQEDKLADDVDVAIFYGRGNWPGLRVEKLYAEYLLPVCSPLLLTGEKPLKTPEDLAKHTLLHDASRRDWQTYTRQLGLNHINVQQGPIFSHSAMVLQAAIHGQGVALANNVMAQSEIEAGRLVCPFNDVLVSKNAFYLVCHDSQAELGKIAAFRQWILAKAAAEQEKFRFRYEQ.

One can recognise an HTH lysR-type domain in the interval 6–63 (PPLNALRVFDAAARHLSFTRAAEELFVTQAAVSHQIKSLEDFLGLKLFRRRNRSLLLT). Residues 23 to 42 (FTRAAEELFVTQAAVSHQIK) constitute a DNA-binding region (H-T-H motif).

Belongs to the LysR transcriptional regulatory family.

The protein localises to the cytoplasm. Functionally, regulatory protein for the glycine cleavage system operon (gcv). Mediates activation of gcv by glycine and repression by purines. GcvA is negatively autoregulated. Binds to three sites upstream of the gcv promoter. This is Glycine cleavage system transcriptional activator (gcvA) from Escherichia coli O157:H7.